A 206-amino-acid polypeptide reads, in one-letter code: Tektin bundle-interacting protein 1 (206 aa).

As to quaternary structure, microtubule inner protein component of sperm flagellar doublet microtubules.

Its subcellular location is the cytoplasm. It is found in the cytoskeleton. The protein resides in the cilium axoneme. The protein localises to the flagellum axoneme. Microtubule inner protein (MIP) part of the dynein-decorated doublet microtubules (DMTs) in cilia axoneme, which is required for motile cilia beating. Located at the center of the tektin bundle where may function to recruit tektins or stabilize the bundle. This is Tektin bundle-interacting protein 1 from Mus musculus (Mouse).